The sequence spans 217 residues: Insulin-like growth factor 2.L (217 aa).

An N-terminal signal peptide occupies residues 1–56; the sequence is MEQLSCKHRSSSMEAEAQLCRQTESRSTQLPRMSVMRHLFLLSITFLVYTLDSAKA. The tract at residues 57–83 is b; it reads YRPTETLCGGELVDTLQFVCGDRGFYF. Disulfide bonds link cysteine 64/cysteine 103, cysteine 76/cysteine 116, and cysteine 102/cysteine 107. A c region spans residues 84–96; the sequence is STNNGRSNRRSNR. The segment at 97 to 117 is a; sequence GIVEECCFRSCDLELLETYCA. The interval 118-123 is d; that stretch reads KPSKNE. The propeptide at 124-217 is e peptide; that stretch reads RDVSTAPATA…LQQTSEPSHN (94 aa).

It belongs to the insulin family.

It is found in the secreted. The insulin-like growth factors, isolated from plasma, are structurally and functionally related to insulin but have a much higher growth-promoting activity. Promotes anterior neural development. Acts as a ligand for integrin which is required for IGF2 signaling. The polypeptide is Insulin-like growth factor 2.L (Xenopus laevis (African clawed frog)).